The primary structure comprises 1265 residues: DNA-directed RNA polymerase subunit beta'' (1265 aa).

Residues C223, C297, C304, and C307 each coordinate Zn(2+).

This sequence belongs to the RNA polymerase beta' chain family. RpoC2 subfamily. In terms of assembly, in plastids the minimal PEP RNA polymerase catalytic core is composed of four subunits: alpha, beta, beta', and beta''. When a (nuclear-encoded) sigma factor is associated with the core the holoenzyme is formed, which can initiate transcription. Requires Zn(2+) as cofactor.

It localises to the plastid. Its subcellular location is the cyanelle. It carries out the reaction RNA(n) + a ribonucleoside 5'-triphosphate = RNA(n+1) + diphosphate. Its function is as follows. DNA-dependent RNA polymerase catalyzes the transcription of DNA into RNA using the four ribonucleoside triphosphates as substrates. This Cyanophora paradoxa protein is DNA-directed RNA polymerase subunit beta''.